The chain runs to 565 residues: Proline--tRNA ligase (565 aa).

The protein belongs to the class-II aminoacyl-tRNA synthetase family. ProS type 1 subfamily. Homodimer.

It is found in the cytoplasm. The catalysed reaction is tRNA(Pro) + L-proline + ATP = L-prolyl-tRNA(Pro) + AMP + diphosphate. Its function is as follows. Catalyzes the attachment of proline to tRNA(Pro) in a two-step reaction: proline is first activated by ATP to form Pro-AMP and then transferred to the acceptor end of tRNA(Pro). As ProRS can inadvertently accommodate and process non-cognate amino acids such as alanine and cysteine, to avoid such errors it has two additional distinct editing activities against alanine. One activity is designated as 'pretransfer' editing and involves the tRNA(Pro)-independent hydrolysis of activated Ala-AMP. The other activity is designated 'posttransfer' editing and involves deacylation of mischarged Ala-tRNA(Pro). The misacylated Cys-tRNA(Pro) is not edited by ProRS. In Francisella tularensis subsp. tularensis (strain FSC 198), this protein is Proline--tRNA ligase.